The sequence spans 404 residues: Cysteine desulfurase IscS (404 aa).

Residues 75 to 76 (AT), asparagine 155, glutamine 183, and 203 to 205 (SAH) each bind pyridoxal 5'-phosphate. Lysine 206 is subject to N6-(pyridoxal phosphate)lysine. Threonine 243 lines the pyridoxal 5'-phosphate pocket. Cysteine 328 functions as the Cysteine persulfide intermediate in the catalytic mechanism. Cysteine 328 is a [2Fe-2S] cluster binding site.

Belongs to the class-V pyridoxal-phosphate-dependent aminotransferase family. NifS/IscS subfamily. In terms of assembly, homodimer. Forms a heterotetramer with IscU, interacts with other sulfur acceptors. Pyridoxal 5'-phosphate is required as a cofactor.

It localises to the cytoplasm. It catalyses the reaction (sulfur carrier)-H + L-cysteine = (sulfur carrier)-SH + L-alanine. It participates in cofactor biosynthesis; iron-sulfur cluster biosynthesis. In terms of biological role, master enzyme that delivers sulfur to a number of partners involved in Fe-S cluster assembly, tRNA modification or cofactor biosynthesis. Catalyzes the removal of elemental sulfur atoms from cysteine to produce alanine. Functions as a sulfur delivery protein for Fe-S cluster synthesis onto IscU, an Fe-S scaffold assembly protein, as well as other S acceptor proteins. The chain is Cysteine desulfurase IscS from Neisseria gonorrhoeae (strain ATCC 700825 / FA 1090).